The primary structure comprises 374 residues: PqqA peptide cyclase (374 aa).

Residues Val-7–Ala-222 form the Radical SAM core domain. 3 residues coordinate [4Fe-4S] cluster: Cys-21, Cys-25, and Cys-28.

It belongs to the radical SAM superfamily. PqqE family. As to quaternary structure, interacts with PqqD. The interaction is necessary for activity of PqqE. [4Fe-4S] cluster serves as cofactor.

The catalysed reaction is [PQQ precursor protein] + S-adenosyl-L-methionine = E-Y cross-linked-[PQQ precursor protein] + 5'-deoxyadenosine + L-methionine + H(+). The protein operates within cofactor biosynthesis; pyrroloquinoline quinone biosynthesis. Catalyzes the cross-linking of a glutamate residue and a tyrosine residue in the PqqA protein as part of the biosynthesis of pyrroloquinoline quinone (PQQ). This Kluyvera intermedia (Enterobacter intermedius) protein is PqqA peptide cyclase.